We begin with the raw amino-acid sequence, 759 residues long: MTEPITPEIVAQHGLKPDEYQRILEHLGRTPTLTELGVFSVMWSEHCSYKSSRVHLKTFPTSGPRVLQGPGENAGVVDLGDGLAAAFKMESHNHPSYIEPYQGAATGVGGILRDVFTMGARPIASLNALRFGDPSHPRTAYLLEGVVAGIGGYGNCMGVPTVGGEVAFHPSYNGNCLVNAFTLGILPADKIFRGTAAGVGNPVMYVGAKTGRDGIHGATMASAEFDASTEEKRPTVQVGDPFMEKLLLEACLELFQTDAVVGIQDMGAAGLTSSSVEMAGRGGNGLDLFLDQVPLREEGMTPYEILLSESQERMLLVAAEGKEELVRSICEKWDLDVAVIGRVTASGRWRAHWRGAVVADLPVDPLTEGAPKYHRPMTPHPALPALHAFDLATLPEPADLGAALVRLLARPTIASKEWVYRQYDHMVRLVGAVRPGGDAAVVRLAVSHDAHAHKGIALSVGVNGRFCFLDPYLGAMHAVAECARNIACVGGEPIAITDCLNFGNPEKPEIMWQFAECVRGIGDACRAFGTPVVSGNVSLYNETEGQGILPTPTVGMVGLVEPVERTCHSTFRDAGDVIALVGSLQGEVGGSEYLSAEHGKEAGRPPALDLAREKAVQETVRRAVRAGLLSSAHDCSEGGLAVALAESCMMHEVPSDGSKPAWIGCAVRIPFPVRKDFVLFGEDASRILVSLPKENAARFVDLAQQCGAPVIRLGAVGGDRLEIQGALSVPVEELARAWRDGIPAVLRRDAAHAGATAPV.

The active site involves histidine 46. ATP is bound by residues tyrosine 49 and lysine 88. Glutamate 90 contributes to the Mg(2+) binding site. Substrate-binding positions include 91 to 94 (SHNH) and arginine 113. The active-site Proton acceptor is histidine 92. Residue aspartate 114 coordinates Mg(2+). Residue glutamine 237 participates in substrate binding. Aspartate 265 serves as a coordination point for Mg(2+). Position 309 to 311 (309 to 311 (ESQ)) interacts with substrate. The ATP site is built by aspartate 498 and glycine 535. Asparagine 536 is a Mg(2+) binding site. Serine 538 provides a ligand contact to substrate.

This sequence belongs to the FGAMS family. As to quaternary structure, monomer. Part of the FGAM synthase complex composed of 1 PurL, 1 PurQ and 2 PurS subunits.

It localises to the cytoplasm. The catalysed reaction is N(2)-formyl-N(1)-(5-phospho-beta-D-ribosyl)glycinamide + L-glutamine + ATP + H2O = 2-formamido-N(1)-(5-O-phospho-beta-D-ribosyl)acetamidine + L-glutamate + ADP + phosphate + H(+). It functions in the pathway purine metabolism; IMP biosynthesis via de novo pathway; 5-amino-1-(5-phospho-D-ribosyl)imidazole from N(2)-formyl-N(1)-(5-phospho-D-ribosyl)glycinamide: step 1/2. Functionally, part of the phosphoribosylformylglycinamidine synthase complex involved in the purines biosynthetic pathway. Catalyzes the ATP-dependent conversion of formylglycinamide ribonucleotide (FGAR) and glutamine to yield formylglycinamidine ribonucleotide (FGAM) and glutamate. The FGAM synthase complex is composed of three subunits. PurQ produces an ammonia molecule by converting glutamine to glutamate. PurL transfers the ammonia molecule to FGAR to form FGAM in an ATP-dependent manner. PurS interacts with PurQ and PurL and is thought to assist in the transfer of the ammonia molecule from PurQ to PurL. This is Phosphoribosylformylglycinamidine synthase subunit PurL from Anaeromyxobacter sp. (strain K).